Consider the following 332-residue polypeptide: Phosphate acyltransferase (332 aa).

It belongs to the PlsX family. Homodimer. Probably interacts with PlsY.

The protein localises to the cytoplasm. It carries out the reaction a fatty acyl-[ACP] + phosphate = an acyl phosphate + holo-[ACP]. It participates in lipid metabolism; phospholipid metabolism. Its function is as follows. Catalyzes the reversible formation of acyl-phosphate (acyl-PO(4)) from acyl-[acyl-carrier-protein] (acyl-ACP). This enzyme utilizes acyl-ACP as fatty acyl donor, but not acyl-CoA. This is Phosphate acyltransferase from Oceanobacillus iheyensis (strain DSM 14371 / CIP 107618 / JCM 11309 / KCTC 3954 / HTE831).